The primary structure comprises 285 residues: Taffazin (285 aa).

Topologically, residues Met-1–Gln-23 are mitochondrial intermembrane. Residues Phe-24–Ser-42 lie within the membrane without spanning it. Topologically, residues Met-43–Asp-285 are mitochondrial intermembrane. The HXXXXD motif signature appears at His-74–Asp-79.

It belongs to the taffazin family.

It localises to the mitochondrion outer membrane. The protein resides in the mitochondrion inner membrane. The catalysed reaction is a 1-acyl-sn-glycero-3-phosphate + a 1,2-diacyl-sn-glycero-3-phospho-(1'-sn-glycerol) = 1-acyl-sn-glycero-3-phospho-(1'-sn-glycerol) + a 1,2-diacyl-sn-glycero-3-phosphate. It carries out the reaction 1-hexadecanoyl-2-(9Z,12Z-octadecadienoyl)-sn-glycero-3-phospho-(1'-sn-glycerol) + 1-(9Z-octadecenoyl)-sn-glycero-3-phosphate = 1-(9Z)-octadecenoyl-2-(9Z,12Z)-octadecadienoyl-sn-glycero-3-phosphate + 1-hexadecanoyl-sn-glycero-3-phospho-(1'-sn-glycerol). The enzyme catalyses 1'-[1,2-diacyl-sn-glycero-3-phospho],3'-[1-acyl-sn-glycero-3-phospho]-glycerol + a 1,2-diacyl-sn-glycero-3-phosphocholine = a cardiolipin + a 1-acyl-sn-glycero-3-phosphocholine. It catalyses the reaction 1-hexadecanoyl-2-(9Z,12Z-octadecadienoyl)-sn-glycero-3-phosphocholine + 1-hexadecanoyl-sn-glycero-3-phosphocholine = 2-(9Z,12Z-octadecadienoyl)-sn-glycero-3-phosphocholine + 1,2-dihexadecanoyl-sn-glycero-3-phosphocholine. The catalysed reaction is 1,2-di-(9Z-octadecenoyl)-sn-glycero-3-phosphocholine + 1-hexadecanoyl-sn-glycero-3-phosphocholine = 1-hexadecanoyl-2-(9Z-octadecenoyl)-sn-glycero-3-phosphocholine + 1-(9Z-octadecenoyl)-sn-glycero-3-phosphocholine. It functions in the pathway phospholipid metabolism. Its function is as follows. Acyltransferase required to remodel newly synthesized phospholipid cardiolipin (1',3'-bis-[1,2-diacyl-sn-glycero-3-phospho]-glycerol or CL), a key component of the mitochondrial inner membrane, with tissue specific acyl chains necessary for adequate mitochondrial function. Its role in cellular physiology is to improve mitochondrial performance. CL is critical for the coassembly of lipids and proteins in mitochondrial membranes, for instance, remodeling of the acyl groups of CL in the mitochondrial inner membrane affects the assembly and stability of respiratory chain complex IV and its supercomplex forms. Catalyzes the transacylation between phospholipids and lysophospholipids, with the highest rate being between phosphatidylcholine (1,2-diacyl-sn-glycero-3-phosphocholine or PC) and CL. Catalyzes both 1-acyl-sn-glycero-3-phosphocholine (lysophosphatidylcholine or LPC) reacylation and PC-CL transacylation, that means, it exchanges acyl groups between CL and PC by a combination of forward and reverse transacylations. Also catalyzes transacylations between other phospholipids such as phosphatidylethanolamine (1,2-diacyl-sn-glycero-3-phosphoethanolamine or PE) and CL, between PC and PE, and between PC and phosphatidate (1,2-diacyl-sn-glycero-3-phosphate or PA), although at lower rate. Not regiospecific, it transfers acyl groups into any of the sn-1 and sn-2 positions of the monolysocardiolipin (MLCL), which is an important prerequisite for uniformity and symmetry in CL acyl distribution. Cannot transacylate dilysocardiolipin (DLCL), thus, the role of MLCL is limited to that of an acyl acceptor. CoA-independent, it can reshuffle molecular species within a single phospholipid class. Redistributes fatty acids between MLCL, CL, and other lipids, which prolongs the half-life of CL. Its action is completely reversible, which allows for cyclic changes, such as fission and fusion or bending and flattening of the membrane. Hence, by contributing to the flexibility of the lipid composition, it plays an important role in the dynamics of mitochondria membranes. The sequence is that of Taffazin (taz) from Dictyostelium discoideum (Social amoeba).